We begin with the raw amino-acid sequence, 345 residues long: Phosphoribosylformylglycinamidine cyclo-ligase (345 aa).

Belongs to the AIR synthase family.

It localises to the cytoplasm. The catalysed reaction is 2-formamido-N(1)-(5-O-phospho-beta-D-ribosyl)acetamidine + ATP = 5-amino-1-(5-phospho-beta-D-ribosyl)imidazole + ADP + phosphate + H(+). Its pathway is purine metabolism; IMP biosynthesis via de novo pathway; 5-amino-1-(5-phospho-D-ribosyl)imidazole from N(2)-formyl-N(1)-(5-phospho-D-ribosyl)glycinamide: step 2/2. The sequence is that of Phosphoribosylformylglycinamidine cyclo-ligase from Escherichia coli O6:K15:H31 (strain 536 / UPEC).